Consider the following 363-residue polypeptide: 24-methylenesterol C-methyltransferase 2 (363 aa).

A helical transmembrane segment spans residues 6-26; it reads MAWTAAGVGMALVYWFVWVMG.

Belongs to the class I-like SAM-binding methyltransferase superfamily. Erg6/SMT family.

The protein localises to the membrane. The enzyme catalyses 24-methylidenelophenol + S-adenosyl-L-methionine = (Z)-24-ethylidenelophenol + S-adenosyl-L-homocysteine + H(+). Its pathway is steroid biosynthesis; sterol biosynthesis. In terms of biological role, catalyzes the methyl transfer from S-adenosyl-methionine to the methylene group of 24-methylene lophenol to form 24-ethylidene lophenol. The polypeptide is 24-methylenesterol C-methyltransferase 2 (Smt2-1) (Oryza sativa subsp. japonica (Rice)).